Here is a 271-residue protein sequence, read N- to C-terminus: Tryptophan synthase alpha chain (271 aa).

Active-site proton acceptor residues include E59 and D70.

Belongs to the TrpA family. Tetramer of two alpha and two beta chains.

It carries out the reaction (1S,2R)-1-C-(indol-3-yl)glycerol 3-phosphate + L-serine = D-glyceraldehyde 3-phosphate + L-tryptophan + H2O. It functions in the pathway amino-acid biosynthesis; L-tryptophan biosynthesis; L-tryptophan from chorismate: step 5/5. In terms of biological role, the alpha subunit is responsible for the aldol cleavage of indoleglycerol phosphate to indole and glyceraldehyde 3-phosphate. This chain is Tryptophan synthase alpha chain, found in Methanosarcina mazei (strain ATCC BAA-159 / DSM 3647 / Goe1 / Go1 / JCM 11833 / OCM 88) (Methanosarcina frisia).